Reading from the N-terminus, the 590-residue chain is Protein NRT1/ PTR FAMILY 6.3 (590 aa).

Helical transmembrane passes span 46-66 (LTTL…MHLG) and 77-97 (FLGT…TFLG). Position 101 is a phosphothreonine; by CIPK23 (Thr101). Helical transmembrane passes span 102-122 (IAIF…STII), 143-163 (GIQL…TGGV), 193-213 (FFFC…YVQD), 219-239 (WGYG…LAGT), 342-362 (MLPI…LTTL), 374-394 (IGSF…GLLL), 423-443 (IGLG…VELK), 460-480 (LGFY…ALIY), 501-521 (GLLL…VTIV), and 542-562 (YNFY…FLVF). His356 and Thr360 together coordinate substrate.

The protein belongs to the major facilitator superfamily. Proton-dependent oligopeptide transporter (POT/PTR) (TC 2.A.17) family. As to quaternary structure, monomer and homodimer. The dimer has the 2 monomers in the same orientation. Interacts with CIPK23. Acts as a high-affinity nitrate transporter when phosphorylated and as a low-affinity transporter when dephosphorylated. Forms homodimer when unphosphorylated and monomer when phosphorylated. Low nitrogen concentration in the medium stimulates phosphorylation. Phosphorylation also regulates the nitrate signaling. In terms of tissue distribution, expressed in the stele in lateral root primordia before emergence and in the tip of primary and emerged lateral roots. Detected in emerging and immature leaves, guard cells, flower buds, style, stigma, anthers and pollen grains. Not detected in the shoot apical meristem.

Its subcellular location is the membrane. Functionally, dual affinity nitrate transporter. Involved in proton-dependent nitrate uptake and in the regulation of the nitrate transporter NRT2.1. Also acts as a nitrate sensor that trigger a specific signaling pathway stimulating lateral root growth and seed germination. The uptake activity is not required for sensor function. Displays an auxin transport facilitation inhibited by high nitrate concentration. Required to prevent auxin accumulation in preemerged lateral root primordia and young lateral roots when external nitrate concentration is low or null. May be involved in the basipetal transport of auxin out of the lateral root tips. Acts as a bidirectional transporter involved in root-to-shoot nitrate translocation. Recognizes specifically nitrate and chlorate, but not nitrite, alanine, sulfate, phosphate or the di-peptide Ala-Ala. The sequence is that of Protein NRT1/ PTR FAMILY 6.3 (NPF6.3) from Arabidopsis thaliana (Mouse-ear cress).